A 182-amino-acid chain; its full sequence is UPF0397 protein BCA_2731 (182 aa).

5 helical membrane passes run 9-29 (VVAI…GFSI), 40-60 (AILT…IGLI), 71-91 (WGIW…MGLI), 114-134 (ITGL…DIIV), and 142-162 (IVIQ…VLGL).

Belongs to the UPF0397 family.

It localises to the cell membrane. In Bacillus cereus (strain 03BB102), this protein is UPF0397 protein BCA_2731.